The chain runs to 113 residues: Fruiting body-specific class I hydrophobin fbh1 (113 aa).

The signal sequence occupies residues 1 to 23; sequence MFSIRIATVVLAASAALRPPARI. 4 cysteine pairs are disulfide-bonded: Cys-33-Cys-92, Cys-40-Cys-86, Cys-41-Cys-73, and Cys-93-Cys-106.

This sequence belongs to the fungal hydrophobin family. Self-assembles to form functional amyloid fibrils called rodlets. Self-assembly into fibrillar rodlets occurs spontaneously at hydrophobic:hydrophilic interfaces and the rodlets further associate laterally to form amphipathic monolayers.

The protein localises to the secreted. It localises to the cell wall. In terms of biological role, aerial growth, conidiation, and dispersal of filamentous fungi in the environment rely upon a capability of their secreting small amphipathic proteins called hydrophobins (HPBs) with low sequence identity. Class I can self-assemble into an outermost layer of rodlet bundles on aerial cell surfaces, conferring cellular hydrophobicity that supports fungal growth, development and dispersal; whereas Class II form highly ordered films at water-air interfaces through intermolecular interactions but contribute nothing to the rodlet structure. Fbh1 is a fruiting body-specific class I hydrophobin that is involved in the growth rate and primordia formation. The polypeptide is Fruiting body-specific class I hydrophobin fbh1 (Pleurotus ostreatus (Oyster mushroom)).